The sequence spans 2878 residues: Trinucleotide repeat-containing gene 18 protein (2878 aa).

Disordered regions lie at residues 1-54 (MDGR…KYMA) and 102-194 (TQKD…SSRL). Over residues 119–128 (TPSSRTPSGH) the composition is skewed to polar residues. Composition is skewed to basic and acidic residues over residues 137-149 (SSRE…RAGR), 158-169 (GKKDPRAREEVS), and 179-194 (QEAR…SSRL). The residue at position 199 (S199) is a Phosphoserine. Disordered stretches follow at residues 259-289 (ARPC…AGVY), 313-442 (FDER…KWKP), 487-507 (MPRA…AAHG), 540-655 (SPFG…DDEC), 865-1002 (AQEH…ALFT), 1033-1104 (ADGL…LESP), 1127-1146 (LEAQ…SEVS), 1171-1228 (LGTQ…DCDL), 1429-1535 (ELVK…DSSS), 1613-1668 (LGLS…DEDE), 1694-1718 (VPKN…RTLK), and 1737-1787 (EARS…GEQA). A compositionally biased stretch (pro residues) spans 264–283 (SPLPPPPPLPPKGPPAPPSS). 2 stretches are compositionally biased toward basic and acidic residues: residues 327–337 (RDVRAREREPG) and 350–362 (RLER…EKSS). Low complexity predominate over residues 376–390 (PPAARSSRSSPDARA). Residues 396-411 (ELLKPEADPRPCERAP) are compositionally biased toward basic and acidic residues. Phosphoserine is present on S540. Residue K549 forms a Glycyl lysine isopeptide (Lys-Gly) (interchain with G-Cter in SUMO2) linkage. Composition is skewed to basic and acidic residues over residues 580–589 (LKRDPERPES) and 865–881 (AQEH…KRSL). Positions 958-969 (SSPPPASPPPTP) are enriched in pro residues. Residues 972–993 (TRKEEAPENVVEKKDLELEKET) are compositionally biased toward basic and acidic residues. Phosphoserine occurs at positions 1053 and 1062. Residues 1068–1088 (EPPRDSPEEEQLADREVKAEV) show a composition bias toward basic and acidic residues. The stretch at 1410–1442 (LDFRMRLAEVQRRYKEKQRELVKLQRRRDSGDR) forms a coiled coil. The span at 1429 to 1448 (ELVKLQRRRDSGDRHEDAHR) shows a compositional bias: basic and acidic residues. Basic residues predominate over residues 1449-1463 (SLARRGPGRPRKRTH). S1469 carries the phosphoserine modification. Residues 1478–1492 (SSSGKGLSSKSLLTS) show a composition bias toward low complexity. The segment covering 1745–1775 (SSEEDSFDQDDSSEEEEEELEEEEEDEEEEG) has biased composition (acidic residues). Phosphoserine is present on residues S1789 and S1795. Residues 1825–1835 (EQKARKKEERQ) show a composition bias toward basic and acidic residues. Disordered regions lie at residues 1825–2040 (EQKA…GAVS), 2052–2080 (FEAN…TPAP), and 2226–2681 (LLVP…RLPS). A compositionally biased stretch (low complexity) spans 1876–1890 (AAPGPGSRASGPSSP). 4 stretches are compositionally biased toward basic and acidic residues: residues 1891–1900 (DKAKLVSEKG), 1925–1936 (LWTRRRSERIFL), 1966–1978 (PRKD…DRKD), and 2024–2034 (RGKEAKKENRG). T2077 carries the post-translational modification Phosphothreonine. Basic and acidic residues predominate over residues 2238 to 2247 (TSKDTGEVKE). Residues 2261-2270 (ARGRGRKPST) are compositionally biased toward basic residues. Composition is skewed to basic and acidic residues over residues 2307 to 2316 (STPEPVDKRA) and 2409 to 2419 (AKEALLLREDP). 3 stretches are compositionally biased toward low complexity: residues 2460–2470 (EPGPGLPLEDP), 2491–2520 (TTSS…SGSE), and 2540–2578 (RTCS…SSST). The segment covering 2579–2591 (TDEDSSCSSDEEA) has biased composition (acidic residues). Residues 2631–2641 (TQPPPQPPPQP) are compositionally biased toward pro residues. Position 2681 is a phosphoserine (S2681). Residues 2727–2872 (EMIRIGDCAV…PTTGMIFSTD (146 aa)) enclose the BAH domain.

This Mus musculus (Mouse) protein is Trinucleotide repeat-containing gene 18 protein (Tnrc18).